The following is a 904-amino-acid chain: Alanine--tRNA ligase (904 aa).

Zn(2+) contacts are provided by histidine 584, histidine 588, cysteine 687, and histidine 691.

The protein belongs to the class-II aminoacyl-tRNA synthetase family. Zn(2+) is required as a cofactor.

It is found in the cytoplasm. The enzyme catalyses tRNA(Ala) + L-alanine + ATP = L-alanyl-tRNA(Ala) + AMP + diphosphate. Functionally, catalyzes the attachment of alanine to tRNA(Ala) in a two-step reaction: alanine is first activated by ATP to form Ala-AMP and then transferred to the acceptor end of tRNA(Ala). Also edits incorrectly charged Ser-tRNA(Ala) and Gly-tRNA(Ala) via its editing domain. The protein is Alanine--tRNA ligase of Mycobacterium bovis (strain ATCC BAA-935 / AF2122/97).